The primary structure comprises 20 residues: Brevinin-1DYa (20 aa).

Cysteines 14 and 20 form a disulfide.

In terms of tissue distribution, expressed by the skin glands.

The protein localises to the secreted. Its function is as follows. Antimicrobial peptide. Has low activity against the Gram-positive bacterium S.aureus and the Gram-negative bacterium E.coli (MIC&lt;15 uM). Has a strong hemolytic activity. This is Brevinin-1DYa from Rana dybowskii (Dybovsky's frog).